We begin with the raw amino-acid sequence, 1936 residues long: Probable inactive serine/threonine-protein kinase DDB_G0278909 (1936 aa).

LRR repeat units lie at residues 61 to 82 (LLEK…GHLN), 83 to 103 (KLKR…QGLS), 104 to 125 (SLVY…SDCK), 126 to 147 (KLIN…DHFS), and 151 to 173 (SLKV…QKKI). The 40-residue stretch at 191–230 (NLIEKKYEEFRLFVINELPKLKYLNWVLISKDERTKASKL) folds into the LRRCT domain. Low complexity-rich tracts occupy residues 253 to 285 (NNPN…SSNN) and 293 to 302 (TTTSVSVGSS). Disordered stretches follow at residues 253–319 (NNPN…STSF) and 347–386 (KERE…IDET). The segment covering 310–319 (SSPNSRSTSF) has biased composition (polar residues). HEAT repeat units follow at residues 325–368 (SVGA…SSSS) and 439–476 (QETE…DLLY). Over residues 353–373 (QSTSPSSSSLSISSSSQNNNS) the composition is skewed to low complexity. Residues 516–526 (LSSSSSSSSTT) show a composition bias toward low complexity. Disordered stretches follow at residues 516 to 544 (LSSS…QLDL), 599 to 620 (NSTL…SPKL), 660 to 689 (IDQN…INNN), 702 to 756 (QSIL…PIMK), and 769 to 809 (QDQP…HFKS). Over residues 527-538 (PPQPQLPPPPPQ) the composition is skewed to pro residues. HEAT repeat units follow at residues 574–614 (PVVS…TTPP) and 617–654 (SPKL…GSAK). Low complexity predominate over residues 600–612 (STLSTTPPLSSTT). The segment covering 660–673 (IDQNTATTPSTPSK) has biased composition (polar residues). Residues 736–756 (STTTNTTPTSTPGSPSKPIMK) are compositionally biased toward low complexity. Residues 774–785 (IVSPPQPQPQPP) are compositionally biased toward pro residues. Residues 786-805 (IVQQKQQQQQQQQQQQQPQQ) show a composition bias toward low complexity. The Protein kinase domain occupies 961–1241 (IQVGSRLGLG…ISKILSQPFQ (281 aa)). Residues 967–975 (LGLGSFGDC) and lysine 988 each bind ATP. Disordered stretches follow at residues 1050–1075 (SHNN…NNNN) and 1261–1308 (NTTI…VKHQ). Low complexity-rich tracts occupy residues 1052–1075 (NNNN…NNNN), 1266–1282 (SSSS…VGSV), and 1291–1302 (NNSNTGSTGSTS). 9 HEAT repeats span residues 1317–1356 (RKMI…ALKA), 1512–1549 (FIEE…NQNC), 1553–1590 (LHNA…DIEF), 1598–1635 (NCLS…SICS), 1690–1728 (QSRL…LFSS), 1739–1775 (SMSV…VNNK), 1780–1817 (IHMM…SQEC), 1821–1858 (FLQK…DDSA), and 1863–1900 (RDNQ…KQIN).

The chain is Probable inactive serine/threonine-protein kinase DDB_G0278909 from Dictyostelium discoideum (Social amoeba).